The sequence spans 347 residues: 4-hydroxy-2-oxovalerate aldolase 1 (347 aa).

Residues 11 to 263 (VVLHDMCLRD…ETGVDLFKLM (253 aa)) form the Pyruvate carboxyltransferase domain. 19-20 (RD) provides a ligand contact to substrate. A Mn(2+)-binding site is contributed by aspartate 20. Histidine 23 acts as the Proton acceptor in catalysis. The substrate site is built by serine 173 and histidine 202. Positions 202 and 204 each coordinate Mn(2+). Tyrosine 293 is a substrate binding site.

The protein belongs to the 4-hydroxy-2-oxovalerate aldolase family.

The enzyme catalyses (S)-4-hydroxy-2-oxopentanoate = acetaldehyde + pyruvate. The polypeptide is 4-hydroxy-2-oxovalerate aldolase 1 (lapG) (Azoarcus sp. (strain BH72)).